The primary structure comprises 264 residues: Glutamate racemase (264 aa).

Substrate is bound by residues 10–11 (DS) and 42–43 (YG). Cysteine 73 acts as the Proton donor/acceptor in catalysis. Residue 74 to 75 (NT) participates in substrate binding. Cysteine 181 serves as the catalytic Proton donor/acceptor. 182–183 (TH) is a binding site for substrate.

The protein belongs to the aspartate/glutamate racemases family.

It carries out the reaction L-glutamate = D-glutamate. Its pathway is cell wall biogenesis; peptidoglycan biosynthesis. Provides the (R)-glutamate required for cell wall biosynthesis. The chain is Glutamate racemase from Thermoanaerobacter sp. (strain X514).